Consider the following 1093-residue polypeptide: Leukemia inhibitory factor receptor (1093 aa).

Positions 1 to 43 (MGAFSWWRQPSWMADNKRGRMTPSLPWLLSALTLLHLMMHVNG) are cleaved as a signal peptide. The Extracellular portion of the chain corresponds to 44–829 (LKRGVQQDLK…SMFVVTKENS (786 aa)). Residues 45-127 (KRGVQQDLKC…QSKFTLNEKD (83 aa)) enclose the Fibronectin type-III 1 domain. 2 disulfides stabilise this stretch: cysteine 54–cysteine 64 and cysteine 81–cysteine 89. N-linked (GlcNAc...) asparagine glycosylation is found at asparagine 165, asparagine 200, asparagine 239, and asparagine 262. Cystine bridges form between cysteine 209/cysteine 266 and cysteine 337/cysteine 347. Fibronectin type-III domains follow at residues 331–428 (VPQK…ERVA), 431–530 (VPIS…TEAT), 534–625 (GPDT…IPND), 623–715 (PNDD…IGYI), and 720–829 (PIVA…KENS). Residues asparagine 386, asparagine 403, asparagine 422, asparagine 441, asparagine 454, and asparagine 477 are each glycosylated (N-linked (GlcNAc...) asparagine). An intrachain disulfide couples cysteine 462 to cysteine 507. A WSXWS motif motif is present at residues 515 to 519 (WSKWS). N-linked (GlcNAc...) asparagine glycans are attached at residues asparagine 568, asparagine 648, asparagine 659, asparagine 676, asparagine 725, and asparagine 783. Residues 830–850 (VGLIIAILIPVAVAVIVGVVT) traverse the membrane as a helical segment. The Cytoplasmic segment spans residues 851–1093 (SILCYRKREW…TNFFQNKPND (243 aa)). A Box 1 motif motif is present at residues 865 to 873 (FYPDIPNPE). Disordered stretches follow at residues 908-941 (ESRSIPPKIEDTEITSPVSERPGESSETDPENQA) and 1003-1093 (LPIN…KPND). Phosphoserine is present on residues serine 923 and serine 1040. 2 stretches are compositionally biased toward polar residues: residues 1028-1063 (ANVNTWNLVSPDSPRSTDSNSEVVSFGSPCSINSRQ) and 1082-1093 (SFTNFFQNKPND).

The protein belongs to the type I cytokine receptor family. Type 2 subfamily. Heterodimer composed of LIFR and IL6ST. The heterodimer formed by LIFR and IL6ST interacts with the complex formed by CNTF and CNTFR.

The protein localises to the cell membrane. Functionally, signal-transducing molecule. May have a common pathway with IL6ST. The soluble form inhibits the biological activity of LIF by blocking its binding to receptors on target cells. The sequence is that of Leukemia inhibitory factor receptor (Lifr) from Rattus norvegicus (Rat).